The following is a 156-amino-acid chain: Small ribosomal subunit protein uS7 (156 aa).

The protein belongs to the universal ribosomal protein uS7 family. Part of the 30S ribosomal subunit. Contacts proteins S9 and S11.

One of the primary rRNA binding proteins, it binds directly to 16S rRNA where it nucleates assembly of the head domain of the 30S subunit. Is located at the subunit interface close to the decoding center, probably blocks exit of the E-site tRNA. The protein is Small ribosomal subunit protein uS7 of Streptococcus sanguinis (strain SK36).